Here is a 166-residue protein sequence, read N- to C-terminus: Endoribonuclease YbeY (166 aa).

Residues H126, H130, and H136 each coordinate Zn(2+).

Belongs to the endoribonuclease YbeY family. Requires Zn(2+) as cofactor.

The protein resides in the cytoplasm. Functionally, single strand-specific metallo-endoribonuclease involved in late-stage 70S ribosome quality control and in maturation of the 3' terminus of the 16S rRNA. The polypeptide is Endoribonuclease YbeY (Laribacter hongkongensis (strain HLHK9)).